Reading from the N-terminus, the 277-residue chain is Sulfur carrier protein FdhD (277 aa).

C123 serves as the catalytic Cysteine persulfide intermediate. 263–268 (FVRGNK) provides a ligand contact to Mo-bis(molybdopterin guanine dinucleotide).

This sequence belongs to the FdhD family.

It is found in the cytoplasm. Its function is as follows. Required for formate dehydrogenase (FDH) activity. Acts as a sulfur carrier protein that transfers sulfur from IscS to the molybdenum cofactor prior to its insertion into FDH. This Corynebacterium efficiens (strain DSM 44549 / YS-314 / AJ 12310 / JCM 11189 / NBRC 100395) protein is Sulfur carrier protein FdhD.